Reading from the N-terminus, the 1401-residue chain is DNA-directed RNA polymerase subunit beta' (1401 aa).

Residues Cys-70, Cys-72, Cys-85, and Cys-88 each contribute to the Zn(2+) site. Residues Asp-460, Asp-462, and Asp-464 each coordinate Mg(2+). Residues Cys-814, Cys-888, Cys-895, and Cys-898 each coordinate Zn(2+). A disordered region spans residues 1369–1388 (RQKQKAVEQEGPSAEQATDN).

The protein belongs to the RNA polymerase beta' chain family. The RNAP catalytic core consists of 2 alpha, 1 beta, 1 beta' and 1 omega subunit. When a sigma factor is associated with the core the holoenzyme is formed, which can initiate transcription. Requires Mg(2+) as cofactor. The cofactor is Zn(2+).

It catalyses the reaction RNA(n) + a ribonucleoside 5'-triphosphate = RNA(n+1) + diphosphate. DNA-dependent RNA polymerase catalyzes the transcription of DNA into RNA using the four ribonucleoside triphosphates as substrates. The sequence is that of DNA-directed RNA polymerase subunit beta' from Aliivibrio fischeri (strain ATCC 700601 / ES114) (Vibrio fischeri).